The chain runs to 247 residues: Neurotrophic factor BDNF precursor form (247 aa).

The first 18 residues, 1–18, serve as a signal peptide directing secretion; sequence MTILFLTMVISYFGCMKA. Positions 19–128 are excised as a propeptide; that stretch reads APMKEANIRG…AANMSMRVRR (110 aa). N-linked (GlcNAc...) asparagine glycosylation occurs at Asn121. Disulfide bonds link Cys141–Cys208, Cys186–Cys237, and Cys196–Cys239.

This sequence belongs to the NGF-beta family. In terms of assembly, monomers and homodimers. Binds to NTRK2/TRKB. Can form heterodimers with other neurotrophin family members, such as NTF3 and NTF4 (in vitro), but the physiological relevance of this is not clear. BDNF precursor form: interacts with the heterodimer formed by NGFR and SORCS2. In terms of processing, N-glycosylated and glycosulfated, contrary to mature BDNF. Post-translationally, mature BDNF is produced by proteolytic removal of the propeptide, catalyzed by a FURIN family member. In addition, the precursor form is proteolytically cleaved within the propeptide, but this is not an obligatory intermediate for the production of mature BDNF. Can be converted into mature BDNF by plasmin (PLG). Detected in blood plasma and in saliva (at protein level). Brain. Highly expressed in hippocampus, amygdala, cerebral cortex and cerebellum. Also expressed in heart, lung, skeletal muscle, testis, prostate and placenta.

Its subcellular location is the secreted. Its function is as follows. Important signaling molecule that activates signaling cascades downstream of NTRK2. During development, promotes the survival and differentiation of selected neuronal populations of the peripheral and central nervous systems. Participates in axonal growth, pathfinding and in the modulation of dendritic growth and morphology. Major regulator of synaptic transmission and plasticity at adult synapses in many regions of the CNS. The versatility of BDNF is emphasized by its contribution to a range of adaptive neuronal responses including long-term potentiation (LTP), long-term depression (LTD), certain forms of short-term synaptic plasticity, as well as homeostatic regulation of intrinsic neuronal excitability. Important signaling molecule that activates signaling cascades downstream of NTRK2. Activates signaling cascades via the heterodimeric receptor formed by NGFR and SORCS2. Signaling via NGFR and SORCS2 plays a role in synaptic plasticity and long-term depression (LTD). Binding to NGFR and SORCS2 promotes neuronal apoptosis. Promotes neuronal growth cone collapse. In Homo sapiens (Human), this protein is Neurotrophic factor BDNF precursor form.